Reading from the N-terminus, the 108-residue chain is MDMLHNKCSDAIKSTSNSNLSNEVDKQKLQYDDLGNTGFSELFEMESQDNNDSIEDFLFFNINLTQEVEFENQRQYEHTKKTKKHNPFYVPSEVVREMVKKHALNGRI.

Over residues Met1 to Asp10 the composition is skewed to basic and acidic residues. The interval Met1–Gln27 is disordered. Polar residues predominate over residues Ile12–Asn22.

This is an uncharacterized protein from Saccharomyces cerevisiae (strain ATCC 204508 / S288c) (Baker's yeast).